The chain runs to 72 residues: MSKEDAIEVMAVVIEPLPNAMFKVELENKHQVLAHVSGKMRKNFIRILPGDRVAVELSPYDLTRGRIVYRYK.

Positions 1-72 constitute an S1-like domain; sequence MSKEDAIEVM…TRGRIVYRYK (72 aa).

It belongs to the IF-1 family. Component of the 30S ribosomal translation pre-initiation complex which assembles on the 30S ribosome in the order IF-2 and IF-3, IF-1 and N-formylmethionyl-tRNA(fMet); mRNA recruitment can occur at any time during PIC assembly.

The protein localises to the cytoplasm. In terms of biological role, one of the essential components for the initiation of protein synthesis. Stabilizes the binding of IF-2 and IF-3 on the 30S subunit to which N-formylmethionyl-tRNA(fMet) subsequently binds. Helps modulate mRNA selection, yielding the 30S pre-initiation complex (PIC). Upon addition of the 50S ribosomal subunit IF-1, IF-2 and IF-3 are released leaving the mature 70S translation initiation complex. The chain is Translation initiation factor IF-1 from Koribacter versatilis (strain Ellin345).